Consider the following 69-residue polypeptide: MAAARNLRTALIFGGFISMVGAAFYPIYFRPLMRLEEYQKEQAVNRAGIVQEDVQPPGLKVWSDPFGRK.

Topologically, residues 1-8 are mitochondrial matrix; sequence MAAARNLR. A helical membrane pass occupies residues 9–29; the sequence is TALIFGGFISMVGAAFYPIYF. Topologically, residues 30 to 69 are mitochondrial intermembrane; it reads RPLMRLEEYQKEQAVNRAGIVQEDVQPPGLKVWSDPFGRK. At phenylalanine 66 the chain carries Phenylalanine amide.

In terms of assembly, component of the MITRAC (mitochondrial translation regulation assembly intermediate of cytochrome c oxidase complex) complex, the core components of this complex being COA3/MITRAC12 and COX14. Interacts with COA3/MITRAC12 and COX4I1. Directly interacts with newly synthesized MT-CO1/COX1. In terms of tissue distribution, highly expressed in the hypothalamus, the spinal cord, and sensory ganglia (at protein level). Also expressed on in the epidermis and dermis layers of the skin (at protein level). Expressed in preadipocytes and adipocytes (at protein level). Expressed in the ovary, specifically in granulosa cells of follicles that have passed the primary stage and in oocytes (at protein level).

The protein resides in the mitochondrion inner membrane. It localises to the secreted. In terms of biological role, component of the MITRAC (mitochondrial translation regulation assembly intermediate of cytochrome c oxidase complex) complex, that regulates cytochrome c oxidase assembly. Promotes the progression of complex assembly after the association of MT-CO1/COX1 with COX4I1 and COX6C. Chaperone-like assembly factor required to stabilize newly synthesized MT-CO1/COX1 and to prevent its premature turnover. Its function is as follows. Peptide involved in a broad spectrum of regulatory functions. Is a ligand for GPR173. As part of the reproductive cycle, it regulates gonadotropin-releasing hormone (GnRH) signaling in the hypothalamus and pituitary gland which augments the release of luteinizing hormone. More specifically, it regulates the expression of transcription factors CEBPB and POU2F1/OCT1 through the cAMP-PKA signaling pathway, which subsequently regulate the expression of GNRHR and KISS1. Plays a protective role in memory retention through activation of GNRHR. Regulates the secretion of AVP by hypothalamic neurons. Plays a role in the transduction of the itch sensation. Induces anxiolytic effects, reducing behavior associated with anxiety. Regulates food intake as well as satiation and satiety by increasing Nucb2 expression in neurons. In the ovary, it regulates follicular growth by stimulating granulosa cell proliferation by increasing the expression of GPR173, CREB1, CYP19A1, KITLG, FSHR, and LHCGR. It also increases the production of estradiol (E2). In the heart, it regulates contractility and relaxation by activating the AKT1-NOS3 and MAPK1-MAPK3 signaling pathways. It also plays a cardioprotective role during ischemia, where it activates the SAFE and RISK pathways. Stimulates the proliferation and differentiation of preadipocytes. In pancreatic islet cells, it induces proliferation of islet cells as well as the production of INS through activation of the MAPK1-MAPK3 signaling pathways. The protein is Small integral membrane protein 20 of Mus musculus (Mouse).